Consider the following 358-residue polypeptide: Cytoplasmic tRNA 2-thiolation protein 1 (358 aa).

It belongs to the TtcA family. CTU1/NCS6/ATPBD3 subfamily.

The protein resides in the cytoplasm. It participates in tRNA modification; 5-methoxycarbonylmethyl-2-thiouridine-tRNA biosynthesis. Plays a central role in 2-thiolation of mcm(5)S(2)U at tRNA wobble positions of tRNA(Lys), tRNA(Glu) and tRNA(Gln). Directly binds tRNAs and probably acts by catalyzing adenylation of tRNAs, an intermediate required for 2-thiolation. It is unclear whether it acts as a sulfurtransferase that transfers sulfur from thiocarboxylated URM1 onto the uridine of tRNAs at wobble position. Prior mcm(5) tRNA modification by the elongator complex is required for 2-thiolation. May also be involved in protein urmylation. This is Cytoplasmic tRNA 2-thiolation protein 1 from Candida glabrata (strain ATCC 2001 / BCRC 20586 / JCM 3761 / NBRC 0622 / NRRL Y-65 / CBS 138) (Yeast).